The primary structure comprises 250 residues: Triosephosphate isomerase (250 aa).

9 to 11 serves as a coordination point for substrate; it reads NWK. Residue His-96 is the Electrophile of the active site. The active-site Proton acceptor is Glu-168. Residues Gly-174, Ser-216, and 237 to 238 each bind substrate; that span reads GG.

Belongs to the triosephosphate isomerase family. Homodimer.

The protein resides in the cytoplasm. It catalyses the reaction D-glyceraldehyde 3-phosphate = dihydroxyacetone phosphate. It participates in carbohydrate biosynthesis; gluconeogenesis. The protein operates within carbohydrate degradation; glycolysis; D-glyceraldehyde 3-phosphate from glycerone phosphate: step 1/1. Involved in the gluconeogenesis. Catalyzes stereospecifically the conversion of dihydroxyacetone phosphate (DHAP) to D-glyceraldehyde-3-phosphate (G3P). In Leptospira interrogans serogroup Icterohaemorrhagiae serovar Lai (strain 56601), this protein is Triosephosphate isomerase.